We begin with the raw amino-acid sequence, 242 residues long: Lysosomal membrane ascorbate-dependent ferrireductase CYB561A3 (242 aa).

Over 1 to 4 the chain is Cytoplasmic; sequence MASG. Residues 5-25 traverse the membrane as a helical segment; it reads WFYLSCMVLGSLGSMCILFTA. The Cytochrome b561 domain occupies 12 to 219; that stretch reads VLGSLGSMCI…FGLLVLYVLL (208 aa). Residues 26-40 lie on the Lumenal side of the membrane; the sequence is YWMQYWRGGFAWDGT. The chain crosses the membrane as a helical span at residues 41–61; that stretch reads VLMFNWHPVLMVAGMVVLYGA. Heme b contacts are provided by H47 and R67. The Cytoplasmic portion of the chain corresponds to 62–81; sequence ASLVYRLPSSWVGPRLPWKV. L-ascorbate-binding residues include R76 and K80. Residues 82-102 form a helical membrane-spanning segment; it reads LHAALHLLAFTCTVVGLIAVF. Heme b-binding positions include H83, 112 to 115, and H117; that span reads HLYS. The Lumenal segment spans residues 103–119; that stretch reads RFHNHSRIAHLYSLHSW. The helical transmembrane segment at 120–140 threads the bilayer; the sequence is LGITTVVLFACQWFLGFAVFL. Residues 141 to 154 lie on the Cytoplasmic side of the membrane; it reads LPWASQWLRSLLKP. Residue R149 participates in L-ascorbate binding. Residues 155-175 traverse the membrane as a helical segment; it reads LHVFFGACILSLSITSVISGI. H156 and E177 together coordinate heme b. Residues 176 to 202 lie on the Lumenal side of the membrane; it reads NEKLFFVLKNATKPYSSLPGEAVFANS. A helical transmembrane segment spans residues 203-223; that stretch reads TGLLVVAFGLLVLYVLLASSW. K224 lines the heme b pocket. Residues 224-242 lie on the Cytoplasmic side of the membrane; it reads KRPDPGALTDRQPLLHDRE.

Homodimer. It depends on heme b as a cofactor. N-glycosylated. Present in lung, spleen, thymus and testis. Present at low level in brain, heart, liver and kidney. Expressed in the alveolar macrophages of the lung, in the white pulp of the spleen, widespread in the thymus, and in the Sertoli cells of the testis (at protein level).

It localises to the late endosome membrane. The protein resides in the lysosome membrane. The catalysed reaction is Fe(3+)(out) + L-ascorbate(in) = monodehydro-L-ascorbate radical(in) + Fe(2+)(out) + H(+). Functionally, transmembrane reductase that uses ascorbate as an electron donor in the cytoplasm and transfers electrons across membranes to reduce iron cations Fe(3+) into Fe(2+) in the lumen of the late endosome and lysosome. Reduced iron can then be extruded from the late endosome and lysosome to the cytoplasm by divalent metal-specific transporters. It is therefore most probably involved in endosomal and lysosomal cellular iron homeostasis. The sequence is that of Lysosomal membrane ascorbate-dependent ferrireductase CYB561A3 from Mus musculus (Mouse).